A 385-amino-acid polypeptide reads, in one-letter code: Lipid-A-disaccharide synthase (385 aa).

This sequence belongs to the LpxB family.

The enzyme catalyses a lipid X + a UDP-2-N,3-O-bis[(3R)-3-hydroxyacyl]-alpha-D-glucosamine = a lipid A disaccharide + UDP + H(+). The protein operates within bacterial outer membrane biogenesis; LPS lipid A biosynthesis. Functionally, condensation of UDP-2,3-diacylglucosamine and 2,3-diacylglucosamine-1-phosphate to form lipid A disaccharide, a precursor of lipid A, a phosphorylated glycolipid that anchors the lipopolysaccharide to the outer membrane of the cell. In Rickettsia canadensis (strain McKiel), this protein is Lipid-A-disaccharide synthase.